Consider the following 485-residue polypeptide: NADH-quinone oxidoreductase subunit N (485 aa).

14 consecutive transmembrane segments (helical) span residues 3–23 (LFMP…TDLF), 30–50 (HLAY…VLNW), 67–87 (YASF…MASV), 96–116 (FQGE…MMAS), 120–140 (LITM…LVGF), 154–174 (LLLG…IYGF), 202–222 (FILG…AVPF), 247–267 (AAGF…PLAL), 271–291 (WALI…VLAI), 299–319 (MLGY…AAVG), 332–352 (LFYL…IIAI), 375–395 (ASAL…AGFL), 411–431 (WLMI…FNVI), and 453–473 (LALG…ETLL).

This sequence belongs to the complex I subunit 2 family. NDH-1 is composed of 14 different subunits. Subunits NuoA, H, J, K, L, M, N constitute the membrane sector of the complex.

Its subcellular location is the cell membrane. It catalyses the reaction a quinone + NADH + 5 H(+)(in) = a quinol + NAD(+) + 4 H(+)(out). NDH-1 shuttles electrons from NADH, via FMN and iron-sulfur (Fe-S) centers, to quinones in the respiratory chain. The immediate electron acceptor for the enzyme in this species is believed to be ubiquinone. Couples the redox reaction to proton translocation (for every two electrons transferred, four hydrogen ions are translocated across the cytoplasmic membrane), and thus conserves the redox energy in a proton gradient. In Dehalococcoides mccartyi (strain ATCC BAA-2100 / JCM 16839 / KCTC 5957 / BAV1), this protein is NADH-quinone oxidoreductase subunit N.